The sequence spans 90 residues: YcgL domain-containing protein YE2368 (90 aa).

Positions 1 to 85 (MLCAIYRSPK…PPESLLKMHL (85 aa)) constitute a YcgL domain.

The polypeptide is YcgL domain-containing protein YE2368 (Yersinia enterocolitica serotype O:8 / biotype 1B (strain NCTC 13174 / 8081)).